The sequence spans 159 residues: Ribosomal RNA large subunit methyltransferase H (159 aa).

S-adenosyl-L-methionine is bound by residues Leu-76, Gly-108, and 127-132 (FSKMTF).

The protein belongs to the RNA methyltransferase RlmH family. As to quaternary structure, homodimer.

The protein localises to the cytoplasm. The catalysed reaction is pseudouridine(1915) in 23S rRNA + S-adenosyl-L-methionine = N(3)-methylpseudouridine(1915) in 23S rRNA + S-adenosyl-L-homocysteine + H(+). In terms of biological role, specifically methylates the pseudouridine at position 1915 (m3Psi1915) in 23S rRNA. The sequence is that of Ribosomal RNA large subunit methyltransferase H from Clostridium kluyveri (strain NBRC 12016).